The chain runs to 271 residues: MGHMVDDLKMVDYYVGKGANGLELDVTFNSNGVAEYTFHGVPCDCFRSCTRYENINTYLDYVRQLTTPGDPKFQEKLIFLIMDLKLKNSPSSYAQFNAGINIADKLSQYYWKDDGKARAYFLISVPYVSQTAFIRGFQHRFEEKGLEKYYEKIGWDFSANEDLNSIRAAYQKLNITGHIWQSDGITNCLTRGDTRLKEAISKRDTPGWHINKVYTWSLDKVNSIKYALNLGVDGVMSNYAETLVTILSEDPFKQKFRLATYEDNPWETFKP.

H3 is an active-site residue. E23 and D25 together coordinate Mg(2+). The active-site Nucleophile is H39. Cystine bridges form between C43–C49 and C45–C188. Residue D83 participates in Mg(2+) binding.

It belongs to the arthropod phospholipase D family. Class II subfamily. It depends on Mg(2+) as a cofactor. As to expression, expressed by the venom gland.

It localises to the secreted. It carries out the reaction an N-(acyl)-sphingosylphosphocholine = an N-(acyl)-sphingosyl-1,3-cyclic phosphate + choline. It catalyses the reaction an N-(acyl)-sphingosylphosphoethanolamine = an N-(acyl)-sphingosyl-1,3-cyclic phosphate + ethanolamine. The enzyme catalyses a 1-acyl-sn-glycero-3-phosphocholine = a 1-acyl-sn-glycero-2,3-cyclic phosphate + choline. The catalysed reaction is a 1-acyl-sn-glycero-3-phosphoethanolamine = a 1-acyl-sn-glycero-2,3-cyclic phosphate + ethanolamine. Dermonecrotic toxins cleave the phosphodiester linkage between the phosphate and headgroup of certain phospholipids (sphingolipid and lysolipid substrates), forming an alcohol (often choline) and a cyclic phosphate. This toxin acts on sphingomyelin (SM). It may also act on ceramide phosphoethanolamine (CPE), lysophosphatidylcholine (LPC) and lysophosphatidylethanolamine (LPE), but not on lysophosphatidylserine (LPS), and lysophosphatidylglycerol (LPG). It acts by transphosphatidylation, releasing exclusively cyclic phosphate products as second products. Induces dermonecrosis, hemolysis, increased vascular permeability, edema, inflammatory response, and platelet aggregation. This is Dermonecrotic toxin SpeSicTox-betaIF1 from Sicarius peruensis (Six-eyed sand spider).